The sequence spans 431 residues: Serine hydroxymethyltransferase 2 (431 aa).

(6S)-5,6,7,8-tetrahydrofolate contacts are provided by residues leucine 131 and 135 to 137 (GHL). At lysine 240 the chain carries N6-(pyridoxal phosphate)lysine.

Belongs to the SHMT family. In terms of assembly, homodimer. Pyridoxal 5'-phosphate serves as cofactor.

The protein localises to the cytoplasm. It carries out the reaction (6R)-5,10-methylene-5,6,7,8-tetrahydrofolate + glycine + H2O = (6S)-5,6,7,8-tetrahydrofolate + L-serine. Its pathway is one-carbon metabolism; tetrahydrofolate interconversion. It participates in amino-acid biosynthesis; glycine biosynthesis; glycine from L-serine: step 1/1. In terms of biological role, catalyzes the reversible interconversion of serine and glycine with tetrahydrofolate (THF) serving as the one-carbon carrier. This reaction serves as the major source of one-carbon groups required for the biosynthesis of purines, thymidylate, methionine, and other important biomolecules. Also exhibits THF-independent aldolase activity toward beta-hydroxyamino acids, producing glycine and aldehydes, via a retro-aldol mechanism. In Photobacterium profundum (strain SS9), this protein is Serine hydroxymethyltransferase 2.